A 567-amino-acid chain; its full sequence is Restriction of telomere capping protein 5 (567 aa).

The region spanning 289 to 515 (KVMTPALLAQ…IQDVEVWGCG (227 aa)) is the TLDc domain.

This sequence belongs to the RTC5 family.

The protein localises to the cytoplasm. Functionally, may be involved in a process influencing telomere capping. The chain is Restriction of telomere capping protein 5 (RTC5) from Saccharomyces cerevisiae (strain YJM789) (Baker's yeast).